The primary structure comprises 171 residues: ATP synthase subunit b (171 aa).

The helical transmembrane segment at 14–34 threads the bilayer; it reads LGDMLFIGISFIVLMALISVV. The segment covering 56-97 has biased composition (basic and acidic residues); it reads SAQKSRQEASDLADQRRDALSHSRAEASEIVADAKKSGEKQR. A disordered region spans residues 56 to 104; it reads SAQKSRQEASDLADQRRDALSHSRAEASEIVADAKKSGEKQRSSIVADA.

This sequence belongs to the ATPase B chain family. In terms of assembly, F-type ATPases have 2 components, F(1) - the catalytic core - and F(0) - the membrane proton channel. F(1) has five subunits: alpha(3), beta(3), gamma(1), delta(1), epsilon(1). F(0) has three main subunits: a(1), b(2) and c(10-14). The alpha and beta chains form an alternating ring which encloses part of the gamma chain. F(1) is attached to F(0) by a central stalk formed by the gamma and epsilon chains, while a peripheral stalk is formed by the delta and b chains.

The protein localises to the cell membrane. F(1)F(0) ATP synthase produces ATP from ADP in the presence of a proton or sodium gradient. F-type ATPases consist of two structural domains, F(1) containing the extramembraneous catalytic core and F(0) containing the membrane proton channel, linked together by a central stalk and a peripheral stalk. During catalysis, ATP synthesis in the catalytic domain of F(1) is coupled via a rotary mechanism of the central stalk subunits to proton translocation. Functionally, component of the F(0) channel, it forms part of the peripheral stalk, linking F(1) to F(0). The chain is ATP synthase subunit b from Lactiplantibacillus plantarum (strain ATCC BAA-793 / NCIMB 8826 / WCFS1) (Lactobacillus plantarum).